The sequence spans 520 residues: Transactivator/viroplasmin protein (520 aa).

2 disordered regions span residues 103–126 (SDFL…SVAP) and 487–520 (EDAS…KQVD).

Belongs to the caulimoviridae viroplasmin family.

The protein resides in the host cytoplasm. Enhances the ribosomal termination-reinitiation event leading to the translation of major open reading frames on the polycistronic viral RNAs. In Arabidopsis thaliana (Mouse-ear cress), this protein is Transactivator/viroplasmin protein.